The following is a 458-amino-acid chain: Bifunctional protein HldE (458 aa).

A ribokinase region spans residues 1–311; sequence MVNVLVVGDL…ENLKSKKSGF (311 aa). An ATP-binding site is contributed by 189–192; the sequence is NKKE. D257 is a catalytic residue. Residues 333-458 form a cytidylyltransferase region; that stretch reads FTNGCFDILH…TTNIINKIKG (126 aa).

The protein in the N-terminal section; belongs to the carbohydrate kinase PfkB family. It in the C-terminal section; belongs to the cytidylyltransferase family. As to quaternary structure, homodimer.

It catalyses the reaction D-glycero-beta-D-manno-heptose 7-phosphate + ATP = D-glycero-beta-D-manno-heptose 1,7-bisphosphate + ADP + H(+). The enzyme catalyses D-glycero-beta-D-manno-heptose 1-phosphate + ATP + H(+) = ADP-D-glycero-beta-D-manno-heptose + diphosphate. It participates in nucleotide-sugar biosynthesis; ADP-L-glycero-beta-D-manno-heptose biosynthesis; ADP-L-glycero-beta-D-manno-heptose from D-glycero-beta-D-manno-heptose 7-phosphate: step 1/4. Its pathway is nucleotide-sugar biosynthesis; ADP-L-glycero-beta-D-manno-heptose biosynthesis; ADP-L-glycero-beta-D-manno-heptose from D-glycero-beta-D-manno-heptose 7-phosphate: step 3/4. Catalyzes the phosphorylation of D-glycero-D-manno-heptose 7-phosphate at the C-1 position to selectively form D-glycero-beta-D-manno-heptose-1,7-bisphosphate. In terms of biological role, catalyzes the ADP transfer from ATP to D-glycero-beta-D-manno-heptose 1-phosphate, yielding ADP-D-glycero-beta-D-manno-heptose. The chain is Bifunctional protein HldE from Campylobacter fetus subsp. fetus (strain 82-40).